The sequence spans 191 residues: Cdc42 homolog (191 aa).

GTP is bound at residue 10–17; sequence GDGAVGKT. The Effector region signature appears at 32–40; the sequence is YVPTVFDNY. Residues 57–61 and 115–118 each bind GTP; these read DTAGQ and TQID. Cys188 is modified (cysteine methyl ester). Cys188 carries the S-geranylgeranyl cysteine lipid modification. Positions 189-191 are cleaved as a propeptide — removed in mature form; sequence KFL.

The protein belongs to the small GTPase superfamily. Rho family. CDC42 subfamily.

It is found in the cell junction. The protein resides in the adherens junction. The protein localises to the cell membrane. Functionally, regulates mbt kinase activity and is also required to recruit mbt to adherens junctions. Together with mbt, regulates photoreceptor cell morphogenesis. The protein is Cdc42 homolog of Aedes aegypti (Yellowfever mosquito).